The sequence spans 156 residues: Low-salt glycan biosynthesis protein Agl8 (156 aa).

Residues 14 to 15 (RI) and arginine 47 contribute to the substrate site. The Nudix hydrolase domain occupies 25–156 (ANVPLVSVDL…YVERYLDALD (132 aa)). Glycine 60, glutamate 80, and glutamine 130 together coordinate Mg(2+). The Nudix box motif lies at 61 to 82 (GTVFKNETLTDALYRVADEELG).

It belongs to the Nudix hydrolase family. Mg(2+) is required as a cofactor.

The protein operates within protein modification; protein glycosylation. Its pathway is cell surface structure biogenesis; S-layer biogenesis. Functionally, nudix hydrolase involved in N-glycan biosynthetic pathway that takes place under low-salt conditions (1.75 M instead of 3.4 M). Participates in the formation of the tetrasaccharide present at 'Asn-532' of S-layer glycoprotein Csg, consisting of a sulfated hexose, 2 hexoses and rhamnose. Mediates attachment of sugar 3 in the tetrasaccharide. The sequence is that of Low-salt glycan biosynthesis protein Agl8 (agl8) from Haloferax volcanii (strain ATCC 29605 / DSM 3757 / JCM 8879 / NBRC 14742 / NCIMB 2012 / VKM B-1768 / DS2) (Halobacterium volcanii).